Consider the following 316-residue polypeptide: uncharacterized protein (316 aa).

Residues 1-34 form a disordered region; that stretch reads MATKRKIGDGYSSSDDNQPKRERSEGGEDQQLVP. The segment covering 17 to 26 has biased composition (basic and acidic residues); it reads NQPKRERSEG.

This is an uncharacterized protein from Lepidoptera (butterflies and moths).